The chain runs to 350 residues: Galactokinase (350 aa).

Residue 14–17 (EHTD) participates in substrate binding. ATP contacts are provided by residues serine 46 and 96 to 102 (GAGLSSS). The Mg(2+) site is built by serine 102 and glutamate 134. The active-site Proton acceptor is aspartate 146. Tyrosine 196 contributes to the substrate binding site.

The protein belongs to the GHMP kinase family. GalK subfamily.

It localises to the cytoplasm. The enzyme catalyses alpha-D-galactose + ATP = alpha-D-galactose 1-phosphate + ADP + H(+). It participates in carbohydrate metabolism; galactose metabolism. In terms of biological role, catalyzes the transfer of the gamma-phosphate of ATP to D-galactose to form alpha-D-galactose-1-phosphate (Gal-1-P). In Thermotoga maritima (strain ATCC 43589 / DSM 3109 / JCM 10099 / NBRC 100826 / MSB8), this protein is Galactokinase.